Here is a 354-residue protein sequence, read N- to C-terminus: Photosystem II D2 protein (354 aa).

Thr-2 carries the post-translational modification N-acetylthreonine. Residue Thr-2 is modified to Phosphothreonine. A helical membrane pass occupies residues 42–62; it reads CAYFALGGFFTGNTFVTSWYT. A chlorophyll a-binding site is contributed by His-119. Residues 126 to 142 traverse the membrane as a helical segment; it reads GFMLRQFEIARAVKIRP. Residues Gln-131 and Asn-144 each contribute to the pheophytin a site. A helical membrane pass occupies residues 154-167; the sequence is VFVSVFLIYPLGQQ. His-199 is a chlorophyll a binding site. Residues 209–229 traverse the membrane as a helical segment; the sequence is AALLCAIHGATVENTLFEDGD. The a plastoquinone site is built by His-216 and Phe-263. Fe cation is bound at residue His-216. Residue His-270 coordinates Fe cation. A helical transmembrane segment spans residues 280–296; sequence GLWMSAIGVVGLALNLR.

Belongs to the reaction center PufL/M/PsbA/D family. As to quaternary structure, PSII is composed of 1 copy each of membrane proteins PsbA, PsbB, PsbC, PsbD, PsbE, PsbF, PsbH, PsbI, PsbJ, PsbK, PsbL, PsbM, PsbT, PsbX, PsbY, PsbZ, Psb30/Ycf12, at least 3 peripheral proteins of the oxygen-evolving complex and a large number of cofactors. It forms dimeric complexes. The D1/D2 heterodimer binds P680, chlorophylls that are the primary electron donor of PSII, and subsequent electron acceptors. It shares a non-heme iron and each subunit binds pheophytin, quinone, additional chlorophylls, carotenoids and lipids. There is also a Cl(-1) ion associated with D1 and D2, which is required for oxygen evolution. The PSII complex binds additional chlorophylls, carotenoids and specific lipids. serves as cofactor.

The protein resides in the plastid. The protein localises to the chloroplast thylakoid membrane. The catalysed reaction is 2 a plastoquinone + 4 hnu + 2 H2O = 2 a plastoquinol + O2. Photosystem II (PSII) is a light-driven water:plastoquinone oxidoreductase that uses light energy to abstract electrons from H(2)O, generating O(2) and a proton gradient subsequently used for ATP formation. It consists of a core antenna complex that captures photons, and an electron transfer chain that converts photonic excitation into a charge separation. The D1/D2 (PsbA/PsbD) reaction center heterodimer binds P680, the primary electron donor of PSII as well as several subsequent electron acceptors. D2 is needed for assembly of a stable PSII complex. The protein is Photosystem II D2 protein of Mesostigma viride (Green alga).